A 313-amino-acid polypeptide reads, in one-letter code: Ribosomal RNA small subunit methyltransferase H (313 aa).

S-adenosyl-L-methionine is bound by residues 35 to 37 (GGH), Asp55, Phe81, Asp103, and Gln110.

The protein belongs to the methyltransferase superfamily. RsmH family.

Its subcellular location is the cytoplasm. The catalysed reaction is cytidine(1402) in 16S rRNA + S-adenosyl-L-methionine = N(4)-methylcytidine(1402) in 16S rRNA + S-adenosyl-L-homocysteine + H(+). Specifically methylates the N4 position of cytidine in position 1402 (C1402) of 16S rRNA. The chain is Ribosomal RNA small subunit methyltransferase H from Pseudomonas syringae pv. syringae (strain B728a).